The following is a 120-amino-acid chain: Ribosome-binding factor A (120 aa).

It belongs to the RbfA family. As to quaternary structure, monomer. Binds 30S ribosomal subunits, but not 50S ribosomal subunits or 70S ribosomes.

The protein localises to the cytoplasm. Functionally, one of several proteins that assist in the late maturation steps of the functional core of the 30S ribosomal subunit. Associates with free 30S ribosomal subunits (but not with 30S subunits that are part of 70S ribosomes or polysomes). Required for efficient processing of 16S rRNA. May interact with the 5'-terminal helix region of 16S rRNA. The polypeptide is Ribosome-binding factor A (Rickettsia rickettsii (strain Iowa)).